The chain runs to 1029 residues: Serine/threonine-protein kinase KSP1 (1029 aa).

The 334-residue stretch at 18-351 (YQKIEDISEG…TELQNLSEYT (334 aa)) folds into the Protein kinase domain. ATP is bound by residues 27 to 35 (GSYGYVSLA) and lysine 47. A compositionally biased stretch (acidic residues) spans 56–79 (GQYDGPQDDENDCDSSDCDDDEDT). The interval 56–105 (GQYDGPQDDENDCDSSDCDDDEDTKVDTDRHENENGNASSNNGSSREKKH) is disordered. A compositionally biased stretch (basic and acidic residues) spans 80–89 (KVDTDRHENE). The span at 90–99 (NGNASSNNGS) shows a compositional bias: low complexity. The Proton acceptor role is filled by aspartate 207. Positions 377–397 (VPPSSAPVSLPTPISSSNKQH) are disordered. Serine 416 and serine 419 each carry phosphoserine. Phosphothreonine is present on residues threonine 501, threonine 504, and threonine 526. Serine 529 bears the Phosphoserine mark. Residues 532–570 (HRYMEGFSNNNNKQYRQNRNYNNNNNNSNNNHGSNYNNF) form a disordered region. Over residues 538–570 (FSNNNNKQYRQNRNYNNNNNNSNNNHGSNYNNF) the composition is skewed to low complexity. Serine 646 carries the phosphoserine modification. The interval 732-824 (STNHNNNGNN…SDSKELEQER (93 aa)) is disordered. The segment covering 734-743 (NHNNNGNNNH) has biased composition (low complexity). The span at 744–754 (IDTNSTTNQYH) shows a compositional bias: polar residues. Basic and acidic residues predominate over residues 813 to 824 (HSSDSKELEQER). Residues serine 845 and serine 884 each carry the phosphoserine modification. A disordered region spans residues 949–978 (EYEGESDKMAHGKMEGGDNESSSTSPDERQ). Residues 953 to 964 (ESDKMAHGKMEG) are compositionally biased toward basic and acidic residues. Threonine 1005 is subject to Phosphothreonine. The residue at position 1014 (serine 1014) is a Phosphoserine.

The protein belongs to the protein kinase superfamily. Ser/Thr protein kinase family. CK2 subfamily. In terms of processing, phosphorylated by PKA in a TORC1-dependent manner. Phosphorylation at PKA consensus sites RRxS/T decreases upon rapamycin treatment.

It localises to the nucleus. The catalysed reaction is L-seryl-[protein] + ATP = O-phospho-L-seryl-[protein] + ADP + H(+). It carries out the reaction L-threonyl-[protein] + ATP = O-phospho-L-threonyl-[protein] + ADP + H(+). May act on PRP20. This Saccharomyces cerevisiae (strain ATCC 204508 / S288c) (Baker's yeast) protein is Serine/threonine-protein kinase KSP1 (KSP1).